A 317-amino-acid polypeptide reads, in one-letter code: Ribosome production factor 2 homolog (317 aa).

The Brix domain maps to 28–240; that stretch reads KTAIFLRGNA…IRRVQPAESD (213 aa). Residues 287–317 form a disordered region; it reads MKGLKRSVEEREDSENEEVEIEEDVISDASE. Phosphoserine occurs at positions 293, 300, 313, and 316. Over residues 296–317 the composition is skewed to acidic residues; sequence EREDSENEEVEIEEDVISDASE.

This sequence belongs to the RPF2 family. Component of a hexameric 5S RNP precursor complex, composed of 5S RNA, rrs1, rpf2, rpl5a/rpl5b, rpl11a/rpl11b and syo1; this complex acts as a precursor for ribosome assembly.

It localises to the nucleus. Its subcellular location is the nucleolus. The sequence is that of Ribosome production factor 2 homolog from Schizosaccharomyces pombe (strain 972 / ATCC 24843) (Fission yeast).